The primary structure comprises 1408 residues: ARF guanine-nucleotide exchange factor 1 (1408 aa).

Residue serine 49 is modified to Phosphoserine. The segment at 262–287 (TTTSDNDLSSTDDDSAVADDNKNEKP) is disordered. Residues 552–706 (FNEKAKKGIQ…IIMLNTDSHN (155 aa)) form the SEC7 domain.

Interacts (via N-terminal region) with SEC21 (via C-terminus). Interacts with GMH1. Interacts with DRS2.

The protein resides in the cytoplasm. The protein localises to the cytosol. Its subcellular location is the membrane. It is found in the endoplasmic reticulum. It localises to the mitochondrion. In terms of biological role, activates the ARF proteins by exchanging bound GDP for free GTP. Plays a role in maintaining mitochondrial morphology, and in the turnover of mitochondria through mitophagy. This chain is ARF guanine-nucleotide exchange factor 1 (GEA1), found in Saccharomyces cerevisiae (strain ATCC 204508 / S288c) (Baker's yeast).